The chain runs to 195 residues: MSEQEKVEQEEISAELETQNEQEKPMEETEIQDGDALENAIARVQELEEQLIQAVKKEQDILLRTRAEIDNIRRRAEQDVEKAHKFALEKFAKDLLETIDNLERALSTPANVENETIKSLVDGVELTLKGLLSTVARFGVEPVGVIGETFNPELHQAISMQPTEGFESNQITVVLQKGYLLNGRVIRPAMVMVAQ.

Positions 1–30 (MSEQEKVEQEEISAELETQNEQEKPMEETE) are disordered. Acidic residues predominate over residues 10–20 (EEISAELETQN).

It belongs to the GrpE family. Homodimer.

The protein resides in the cytoplasm. Its function is as follows. Participates actively in the response to hyperosmotic and heat shock by preventing the aggregation of stress-denatured proteins, in association with DnaK and GrpE. It is the nucleotide exchange factor for DnaK and may function as a thermosensor. Unfolded proteins bind initially to DnaJ; upon interaction with the DnaJ-bound protein, DnaK hydrolyzes its bound ATP, resulting in the formation of a stable complex. GrpE releases ADP from DnaK; ATP binding to DnaK triggers the release of the substrate protein, thus completing the reaction cycle. Several rounds of ATP-dependent interactions between DnaJ, DnaK and GrpE are required for fully efficient folding. The polypeptide is Protein GrpE (Histophilus somni (strain 2336) (Haemophilus somnus)).